The sequence spans 387 residues: Phosphoglycerate kinase (387 aa).

Residues 21-23 (DLN), arginine 36, 59-62 (HLGR), arginine 113, and arginine 146 contribute to the substrate site. ATP contacts are provided by residues lysine 197, glutamate 314, and 340–343 (GGDT).

This sequence belongs to the phosphoglycerate kinase family. Monomer.

The protein resides in the cytoplasm. The catalysed reaction is (2R)-3-phosphoglycerate + ATP = (2R)-3-phospho-glyceroyl phosphate + ADP. It functions in the pathway carbohydrate degradation; glycolysis; pyruvate from D-glyceraldehyde 3-phosphate: step 2/5. This chain is Phosphoglycerate kinase, found in Aliivibrio fischeri (strain ATCC 700601 / ES114) (Vibrio fischeri).